The chain runs to 128 residues: NADPH-dependent 7-cyano-7-deazaguanine reductase (128 aa).

Catalysis depends on Cys39, which acts as the Thioimide intermediate. Asp46 (proton donor) is an active-site residue. Substrate contacts are provided by residues 61-63 (IEL) and 80-81 (HE).

It belongs to the GTP cyclohydrolase I family. QueF type 1 subfamily.

The protein resides in the cytoplasm. It carries out the reaction 7-aminomethyl-7-carbaguanine + 2 NADP(+) = 7-cyano-7-deazaguanine + 2 NADPH + 3 H(+). It functions in the pathway tRNA modification; tRNA-queuosine biosynthesis. Its function is as follows. Catalyzes the NADPH-dependent reduction of 7-cyano-7-deazaguanine (preQ0) to 7-aminomethyl-7-deazaguanine (preQ1). The sequence is that of NADPH-dependent 7-cyano-7-deazaguanine reductase from Magnetococcus marinus (strain ATCC BAA-1437 / JCM 17883 / MC-1).